The following is a 193-amino-acid chain: Phosphoheptose isomerase (193 aa).

Residues 37-193 (LADSFKVGGK…QLIEKEMVKA (157 aa)) form the SIS domain. 52 to 54 (NGG) lines the substrate pocket. 2 residues coordinate Zn(2+): His-61 and Glu-65. Substrate-binding positions include Glu-65, 93–94 (ND), 119–121 (STS), Ser-124, and Gln-172. Zn(2+)-binding residues include Gln-172 and His-180.

This sequence belongs to the SIS family. GmhA subfamily. Homotetramer. The cofactor is Zn(2+).

Its subcellular location is the cytoplasm. The catalysed reaction is 2 D-sedoheptulose 7-phosphate = D-glycero-alpha-D-manno-heptose 7-phosphate + D-glycero-beta-D-manno-heptose 7-phosphate. It participates in carbohydrate biosynthesis; D-glycero-D-manno-heptose 7-phosphate biosynthesis; D-glycero-alpha-D-manno-heptose 7-phosphate and D-glycero-beta-D-manno-heptose 7-phosphate from sedoheptulose 7-phosphate: step 1/1. Its pathway is bacterial outer membrane biogenesis; LPS core biosynthesis. Its function is as follows. Catalyzes the isomerization of sedoheptulose 7-phosphate in D-glycero-D-manno-heptose 7-phosphate. In Photorhabdus laumondii subsp. laumondii (strain DSM 15139 / CIP 105565 / TT01) (Photorhabdus luminescens subsp. laumondii), this protein is Phosphoheptose isomerase.